The primary structure comprises 718 residues: Tegument protein UL46 (718 aa).

2 disordered regions span residues 433-510 and 581-611; these read SAGP…EPPA and TADD…DDES. Residues 444 to 454 are compositionally biased toward gly residues; that stretch reads GPGGHRAGGGT. The segment covering 455 to 467 has biased composition (basic and acidic residues); it reads CREKIQRARRDNE.

The protein belongs to the herpesviridae HHV-1 VP11/12 protein family. As to quaternary structure, interacts with VP16. Interacts with host LCK, PIK3R1, SHC1 AND GRB2; these interactions promote the activation of the PI3K/AKT pathway. Interacts with host YWHAB. Interacts with ICP0; this interaction targets UL46 for degradation by the proteasome. Interacts (via N-terminus) with host TMEM173. Interacts (via C-terminus) with host TBK1. Interacts with host DOK2. Phosphorylated by host LCK. The phosphorylation seems to be lymphocyte-specific.

Its subcellular location is the virion tegument. The protein localises to the host cytoplasm. It is found in the host cell membrane. In terms of biological role, plays a role in the activation of the host PI3K/AKT pathway to promote cell survival. Interacts with and activates host LCK and thereby recruits downstream partners SHC1, GRB2 and PI3KR1 in order to activate the PI3K pathway by phosphorylating host AKT on its activating residues. This mechanism is inhibited by the viral protein US3 that instead promotes incorporation of UL46 into virions. Plays a role in the inhibition of TMEM173/STING-mediated type I interferon production. Interacts with host DOK2 and induces its degradation. This immune evasion mechanism to inactivate T-cells may play an important role during pathogenesis. This chain is Tegument protein UL46, found in Homo sapiens (Human).